Consider the following 447-residue polypeptide: Asparagine--tRNA ligase (447 aa).

Belongs to the class-II aminoacyl-tRNA synthetase family. In terms of assembly, homodimer.

The protein resides in the cytoplasm. It carries out the reaction tRNA(Asn) + L-asparagine + ATP = L-asparaginyl-tRNA(Asn) + AMP + diphosphate + H(+). This is Asparagine--tRNA ligase from Streptococcus pneumoniae (strain ATCC BAA-255 / R6).